Reading from the N-terminus, the 247-residue chain is UPF0246 protein LSL_1719 (247 aa).

The protein belongs to the UPF0246 family.

In Ligilactobacillus salivarius (strain UCC118) (Lactobacillus salivarius), this protein is UPF0246 protein LSL_1719.